The sequence spans 129 residues: Small ribosomal subunit protein uS8 (129 aa).

The protein belongs to the universal ribosomal protein uS8 family. As to quaternary structure, part of the 30S ribosomal subunit. Contacts proteins S5 and S12.

One of the primary rRNA binding proteins, it binds directly to 16S rRNA central domain where it helps coordinate assembly of the platform of the 30S subunit. This Spiroplasma kunkelii protein is Small ribosomal subunit protein uS8.